The sequence spans 916 residues: Pertactin autotransporter (916 aa).

The signal sequence occupies residues 1–37; the sequence is MNMSLSRIVKAAPLRRTTLAMALGALGALGAAPAAHA. A Cell attachment site; involved in adhesion to various eukaryotic cell lines motif is present at residues 263–265; it reads RGD. 3 repeat units span residues 269–273, 274–278, and 279–283. Residues 269–288 are 4 X 5 AA tandem repeats of G-G-A-V-P; that stretch reads GGAVPGGAVPGGAVPGGFGP. One copy of the 4; approximate repeat lies at 284–288; that stretch reads GGFGP. The disordered stretch occupies residues 564 to 613; that stretch reads SLVGAKAPPAPKPAPQPGPQPGPQPPQPPQPPQRQPEAPAPQPPAGRELS. Pro residues predominate over residues 571 to 607; it reads PPAPKPAPQPGPQPGPQPPQPPQPPQRQPEAPAPQPP. The 6 X 3 AA repeats of P-Q-P stretch occupies residues 578-606; sequence PQPGPQPGPQPPQPPQPPQRQPEAPAPQP. In terms of domain architecture, Autotransporter spans 648-916; it reads LNPDAGGAWG…TFHAGYRYSW (269 aa). The Cell attachment site motif lies at 706–708; sequence RGD.

As to quaternary structure, monomer.

Its subcellular location is the periplasm. The protein localises to the secreted. The protein resides in the cell surface. It is found in the cell outer membrane. Functionally, agglutinogen that binds to eukaryotic cells; a process mediated by the R-G-D sequence. Pertactin may have a role in bacterial adhesion, and thus play a role in virulence. May contribute to the disease state of whooping cough. The polypeptide is Pertactin autotransporter (prn) (Bordetella bronchiseptica (strain ATCC BAA-588 / NCTC 13252 / RB50) (Alcaligenes bronchisepticus)).